We begin with the raw amino-acid sequence, 75 residues long: MAVEKFETALKKLEDVVKKLEGGELSLEESLKAFEEGVKFSAFCSKKLNEAERRVETLVKQRDGSFVTKPFEEEE.

The protein belongs to the XseB family. In terms of assembly, heterooligomer composed of large and small subunits.

It is found in the cytoplasm. The enzyme catalyses Exonucleolytic cleavage in either 5'- to 3'- or 3'- to 5'-direction to yield nucleoside 5'-phosphates.. Its function is as follows. Bidirectionally degrades single-stranded DNA into large acid-insoluble oligonucleotides, which are then degraded further into small acid-soluble oligonucleotides. The chain is Exodeoxyribonuclease 7 small subunit from Citrifermentans bemidjiense (strain ATCC BAA-1014 / DSM 16622 / JCM 12645 / Bem) (Geobacter bemidjiensis).